Consider the following 105-residue polypeptide: Met repressor (105 aa).

Belongs to the MetJ family. As to quaternary structure, homodimer.

Its subcellular location is the cytoplasm. This regulatory protein, when combined with SAM (S-adenosylmethionine) represses the expression of the methionine regulon and of enzymes involved in SAM synthesis. The polypeptide is Met repressor (Yersinia enterocolitica serotype O:8 / biotype 1B (strain NCTC 13174 / 8081)).